The following is a 250-amino-acid chain: Triosephosphate isomerase (250 aa).

Residue 9 to 11 (NWK) coordinates substrate. Histidine 95 acts as the Electrophile in catalysis. Residue glutamate 167 is the Proton acceptor of the active site. Residues glycine 173, serine 212, and 233–234 (GG) contribute to the substrate site.

This sequence belongs to the triosephosphate isomerase family. As to quaternary structure, homodimer.

It localises to the cytoplasm. It catalyses the reaction D-glyceraldehyde 3-phosphate = dihydroxyacetone phosphate. The protein operates within carbohydrate biosynthesis; gluconeogenesis. Its pathway is carbohydrate degradation; glycolysis; D-glyceraldehyde 3-phosphate from glycerone phosphate: step 1/1. Involved in the gluconeogenesis. Catalyzes stereospecifically the conversion of dihydroxyacetone phosphate (DHAP) to D-glyceraldehyde-3-phosphate (G3P). This Nitrosococcus oceani (strain ATCC 19707 / BCRC 17464 / JCM 30415 / NCIMB 11848 / C-107) protein is Triosephosphate isomerase.